The following is a 160-amino-acid chain: Envelope glycoprotein L (160 aa).

The first 22 residues, 1–22 (MASHKWLLQMIVFLKTITIAYC), serve as a signal peptide directing secretion. An interaction with gH region spans residues 24–149 (HLQDDTPLFF…TNIPENGCVW (126 aa)). The 133-residue stretch at 28-160 (DTPLFFGAKP…ADRLFQRVCQ (133 aa)) folds into the gL alphaherpesvirus-type domain. 2 disulfides stabilise this stretch: Cys49–Cys80 and Cys147–Cys159.

Belongs to the herpesviridae glycoprotein L (gL) family. Alphaherpesvirinae gL subfamily. Interacts with glycoprotein H (gH); this interaction is necessary for the correct processing and cell surface expression of gH. The heterodimer gH/gL seems to interact with gB trimers during fusion.

It localises to the virion membrane. It is found in the host cell membrane. Its subcellular location is the host Golgi apparatus. The protein localises to the host trans-Golgi network. In terms of biological role, the heterodimer glycoprotein H-glycoprotein L is required for the fusion of viral and plasma membranes leading to virus entry into the host cell. Acts as a functional inhibitor of gH and maintains gH in an inhibited form. Upon binding to host integrins, gL dissociates from gH leading to activation of the viral fusion glycoproteins gB and gH. The chain is Envelope glycoprotein L from Varicella-zoster virus (strain Oka vaccine) (HHV-3).